The following is a 540-amino-acid chain: CTP synthase (540 aa).

An amidoligase domain region spans residues 1–270 (MNNLTSTKFI…DTQILKHFNI (270 aa)). Ser-18 lines the CTP pocket. Ser-18 contributes to the UTP binding site. Residues 19–24 (SLGKGL) and Asp-76 contribute to the ATP site. Mg(2+)-binding residues include Asp-76 and Glu-144. Residues 151–153 (DIE), 191–196 (KTKPTQ), and Lys-227 contribute to the CTP site. UTP-binding positions include 191 to 196 (KTKPTQ) and Lys-227. The 243-residue stretch at 295–537 (TIAIIGKYIK…VQASLNYQET (243 aa)) folds into the Glutamine amidotransferase type-1 domain. Gly-356 contacts L-glutamine. The active-site Nucleophile; for glutamine hydrolysis is the Cys-383. L-glutamine is bound by residues 384-387 (MGMQ), Glu-407, and Arg-462. Catalysis depends on residues His-510 and Glu-512.

Belongs to the CTP synthase family. As to quaternary structure, homotetramer.

It carries out the reaction UTP + L-glutamine + ATP + H2O = CTP + L-glutamate + ADP + phosphate + 2 H(+). It catalyses the reaction L-glutamine + H2O = L-glutamate + NH4(+). The enzyme catalyses UTP + NH4(+) + ATP = CTP + ADP + phosphate + 2 H(+). The protein operates within pyrimidine metabolism; CTP biosynthesis via de novo pathway; CTP from UDP: step 2/2. Its activity is regulated as follows. Allosterically activated by GTP, when glutamine is the substrate; GTP has no effect on the reaction when ammonia is the substrate. The allosteric effector GTP functions by stabilizing the protein conformation that binds the tetrahedral intermediate(s) formed during glutamine hydrolysis. Inhibited by the product CTP, via allosteric rather than competitive inhibition. Functionally, catalyzes the ATP-dependent amination of UTP to CTP with either L-glutamine or ammonia as the source of nitrogen. Regulates intracellular CTP levels through interactions with the four ribonucleotide triphosphates. The sequence is that of CTP synthase from Ehrlichia ruminantium (strain Welgevonden).